We begin with the raw amino-acid sequence, 369 residues long: 4-hydroxy-3-methylbut-2-en-1-yl diphosphate synthase (flavodoxin) (369 aa).

[4Fe-4S] cluster contacts are provided by Cys270, Cys273, Cys305, and Glu312.

It belongs to the IspG family. [4Fe-4S] cluster serves as cofactor.

The catalysed reaction is (2E)-4-hydroxy-3-methylbut-2-enyl diphosphate + oxidized [flavodoxin] + H2O + 2 H(+) = 2-C-methyl-D-erythritol 2,4-cyclic diphosphate + reduced [flavodoxin]. The protein operates within isoprenoid biosynthesis; isopentenyl diphosphate biosynthesis via DXP pathway; isopentenyl diphosphate from 1-deoxy-D-xylulose 5-phosphate: step 5/6. Converts 2C-methyl-D-erythritol 2,4-cyclodiphosphate (ME-2,4cPP) into 1-hydroxy-2-methyl-2-(E)-butenyl 4-diphosphate. This is 4-hydroxy-3-methylbut-2-en-1-yl diphosphate synthase (flavodoxin) from Psychromonas ingrahamii (strain DSM 17664 / CCUG 51855 / 37).